Reading from the N-terminus, the 401-residue chain is UPF0242 protein CCA_01002 (401 aa).

Belongs to the UPF0242 family.

This Chlamydia caviae (strain ATCC VR-813 / DSM 19441 / 03DC25 / GPIC) (Chlamydophila caviae) protein is UPF0242 protein CCA_01002.